Here is an 883-residue protein sequence, read N- to C-terminus: Alanine--tRNA ligase (883 aa).

Residues H563, H567, C677, and H681 each contribute to the Zn(2+) site.

It belongs to the class-II aminoacyl-tRNA synthetase family. Requires Zn(2+) as cofactor.

It is found in the cytoplasm. The enzyme catalyses tRNA(Ala) + L-alanine + ATP = L-alanyl-tRNA(Ala) + AMP + diphosphate. Its function is as follows. Catalyzes the attachment of alanine to tRNA(Ala) in a two-step reaction: alanine is first activated by ATP to form Ala-AMP and then transferred to the acceptor end of tRNA(Ala). Also edits incorrectly charged Ser-tRNA(Ala) and Gly-tRNA(Ala) via its editing domain. The sequence is that of Alanine--tRNA ligase from Cereibacter sphaeroides (strain ATCC 17025 / ATH 2.4.3) (Rhodobacter sphaeroides).